Here is a 197-residue protein sequence, read N- to C-terminus: Probable GTP-binding protein EngB (197 aa).

One can recognise an EngB-type G domain in the interval 26–197; it reads DLPEIALAGR…TSWDAILESL (172 aa). GTP is bound by residues 34-41, 61-65, 79-82, 146-149, and 178-180; these read GRSNVGKS, GKTQS, DVPG, TKAD, and FSS. 2 residues coordinate Mg(2+): Ser-41 and Thr-63.

Belongs to the TRAFAC class TrmE-Era-EngA-EngB-Septin-like GTPase superfamily. EngB GTPase family. Mg(2+) serves as cofactor.

Its function is as follows. Necessary for normal cell division and for the maintenance of normal septation. The protein is Probable GTP-binding protein EngB of Streptococcus mutans serotype c (strain ATCC 700610 / UA159).